Here is a 160-residue protein sequence, read N- to C-terminus: S-ribosylhomocysteine lyase (160 aa).

His57, His61, and Cys127 together coordinate Fe cation.

It belongs to the LuxS family. In terms of assembly, homodimer. Fe cation serves as cofactor.

The enzyme catalyses S-(5-deoxy-D-ribos-5-yl)-L-homocysteine = (S)-4,5-dihydroxypentane-2,3-dione + L-homocysteine. Its function is as follows. Involved in the synthesis of autoinducer 2 (AI-2) which is secreted by bacteria and is used to communicate both the cell density and the metabolic potential of the environment. The regulation of gene expression in response to changes in cell density is called quorum sensing. Catalyzes the transformation of S-ribosylhomocysteine (RHC) to homocysteine (HC) and 4,5-dihydroxy-2,3-pentadione (DPD). This is S-ribosylhomocysteine lyase from Streptococcus pneumoniae (strain CGSP14).